The sequence spans 206 residues: High frequency lysogenization protein HflD homolog (206 aa).

Belongs to the HflD family.

The protein localises to the cytoplasm. It localises to the cell inner membrane. This chain is High frequency lysogenization protein HflD homolog, found in Ectopseudomonas mendocina (strain ymp) (Pseudomonas mendocina).